A 257-amino-acid polypeptide reads, in one-letter code: Snake venom serine protease 3 (257 aa).

Positions 1 to 18 are cleaved as a signal peptide; it reads MVLIRVLANLLILQLSYA. Residues 19-24 constitute a propeptide that is removed on maturation; that stretch reads QKSSEL. The region spanning 25–248 is the Peptidase S1 domain; that stretch reads VIGGDECNIN…YTDWIQNIIA (224 aa). Disulfide bonds link C31/C163, C50/C66, C98/C255, C142/C209, C174/C188, and C199/C224. N44 carries N-linked (GlcNAc...) asparagine glycosylation. The Charge relay system role is filled by H65. N103 is a glycosylation site (N-linked (GlcNAc...) asparagine). The active-site Charge relay system is the D110. N-linked (GlcNAc...) asparagine glycosylation is found at N117 and N154. S203 (charge relay system) is an active-site residue. A glycan (N-linked (GlcNAc...) asparagine) is linked at N250.

This sequence belongs to the peptidase S1 family. Snake venom subfamily. As to quaternary structure, monomer. Expressed by the venom gland.

The protein localises to the secreted. Its function is as follows. Snake venom serine protease that may act in the hemostasis system of the prey. In Protobothrops flavoviridis (Habu), this protein is Snake venom serine protease 3 (TLF3).